The following is a 166-amino-acid chain: Protein C2-DOMAIN ABA-RELATED 11 (166 aa).

Residue methionine 1 is modified to N-acetylmethionine. Residues 1–103 form the C2 domain; the sequence is MGEPLGLLQV…ISVARLRHVV (103 aa). Glycine 2 is modified (N-acetylglycine; in Protein C2-DOMAIN ABA-RELATED 11, N-terminally processed). Ca(2+)-binding residues include arginine 21, aspartate 22, aspartate 27, aspartate 73, lysine 74, aspartate 75, and aspartate 81.

Belongs to the plant CAR protein family. Binds to PYR/PYL/RCAR abscisic acid intracellular receptors in an ABA-independent manner, both at the plasma membrane and in the nucleus.

It localises to the cell membrane. It is found in the nucleus. In terms of biological role, stimulates the GTPase/ATPase activities of Obg-like ATPases. Mediates the transient calcium-dependent interaction of PYR/PYL/RCAR abscisic acid (ABA) receptors with the plasma membrane and thus regulates ABA sensitivity. The polypeptide is Protein C2-DOMAIN ABA-RELATED 11 (Arabidopsis thaliana (Mouse-ear cress)).